A 253-amino-acid polypeptide reads, in one-letter code: Cyclin-C1-1 (253 aa).

The protein belongs to the cyclin family. Cyclin C subfamily.

This Arabidopsis thaliana (Mouse-ear cress) protein is Cyclin-C1-1 (CYCC1-1).